Reading from the N-terminus, the 182-residue chain is UPF0301 protein NMCC_1249 (182 aa).

Belongs to the UPF0301 (AlgH) family.

This Neisseria meningitidis serogroup C (strain 053442) protein is UPF0301 protein NMCC_1249.